The chain runs to 1191 residues: Probable inositol polyphosphate 5-phosphatase C9G1.10c (1191 aa).

5 stretches are compositionally biased toward polar residues: residues 1–10 (MASRQGFSNV), 72–101 (QVSS…NPSN), 114–135 (SDSS…SFVS), 151–161 (SFQSSVQSTKG), and 181–193 (NFSS…SPIS). Residues 1 to 193 (MASRQGFSNV…SKAGSSSPIS (193 aa)) form a disordered region. Phosphoserine is present on Ser-195. Disordered stretches follow at residues 205-281 (SQSP…PQPV), 294-334 (SQQL…DASL), and 355-425 (IPEK…SSSS). The segment covering 268–280 (TPPPIPSPRPPQP) has biased composition (pro residues). A compositionally biased stretch (basic residues) spans 302 to 311 (SPRKPPKPPL). Composition is skewed to polar residues over residues 316-334 (TQRS…DASL), 367-382 (HTLS…SENL), and 400-413 (LATN…VSTE). Residues 414 to 425 (QSDPSVAASSSS) show a composition bias toward low complexity.

This sequence belongs to the inositol 1,4,5-trisphosphate 5-phosphatase family.

It is found in the cytoplasm. This chain is Probable inositol polyphosphate 5-phosphatase C9G1.10c, found in Schizosaccharomyces pombe (strain 972 / ATCC 24843) (Fission yeast).